The sequence spans 342 residues: MSAFTPASEVLLRHSDDFEQSRILFAGDLQDDLPARFECAASRAHTQQFHHWQVLSRQMGDNVRFSLVAQASDVADCDTLIYYWPKNKPEAQFQLMNILSLMPSGSDVFVVGENRSGVRSAEQMLADYAPLNKVDSARRCGLYHGRLEKQPQFSLESWWAEYNIDGLTIKTLPGVFSRDGLDVGSQLLLSTLTPHTKGKVLDVGCGAGVLSAALASHSPKVRLTLCDVSAPAVEASRATLAANGLEGEVFASNIFSEVKGRFDMIISNPPFHDGMQTSLDAAQTLIRGAVRHLNSGGELRIVANAFLPYPKILDETFGFHEVIAQTGRFKVYRTVMTRQAKK.

Belongs to the methyltransferase superfamily. RsmC family. As to quaternary structure, monomer.

The protein localises to the cytoplasm. It catalyses the reaction guanosine(1207) in 16S rRNA + S-adenosyl-L-methionine = N(2)-methylguanosine(1207) in 16S rRNA + S-adenosyl-L-homocysteine + H(+). Specifically methylates the guanine in position 1207 of 16S rRNA in the 30S particle. The chain is Ribosomal RNA small subunit methyltransferase C from Salmonella newport (strain SL254).